The primary structure comprises 483 residues: Cobyric acid synthase (483 aa).

The GATase cobBQ-type domain maps to 248–435 (VLKVVVPVLP…LHGLFETAAA (188 aa)). C329 (nucleophile) is an active-site residue. The active site involves H427.

This sequence belongs to the CobB/CobQ family. CobQ subfamily.

The protein operates within cofactor biosynthesis; adenosylcobalamin biosynthesis. Functionally, catalyzes amidations at positions B, D, E, and G on adenosylcobyrinic A,C-diamide. NH(2) groups are provided by glutamine, and one molecule of ATP is hydrogenolyzed for each amidation. This is Cobyric acid synthase from Pseudomonas fluorescens (strain SBW25).